We begin with the raw amino-acid sequence, 292 residues long: uncharacterized protein (292 aa).

Positions 1-21 (MNSNSNKKRDPARFPAGVAQG) are cleaved as a signal peptide. Residues 1–30 (MNSNSNKKRDPARFPAGVAQGCSTTRAGDL) are disordered.

This is an uncharacterized protein from Treponema pallidum (strain Nichols).